The following is a 389-amino-acid chain: Phospho-N-acetylmuramoyl-pentapeptide-transferase (389 aa).

10 helical membrane-spanning segments follow: residues arginine 25–isoleucine 45, methionine 74–glycine 94, phenylalanine 97–tyrosine 117, phenylalanine 134–glutamate 154, valine 190–serine 210, glycine 222–methionine 242, alanine 259–phenylalanine 279, valine 286–isoleucine 306, isoleucine 311–valine 331, and glutamine 366–leucine 386.

Belongs to the glycosyltransferase 4 family. MraY subfamily. Requires Mg(2+) as cofactor.

It is found in the cell inner membrane. It catalyses the reaction UDP-N-acetyl-alpha-D-muramoyl-L-alanyl-gamma-D-glutamyl-meso-2,6-diaminopimeloyl-D-alanyl-D-alanine + di-trans,octa-cis-undecaprenyl phosphate = di-trans,octa-cis-undecaprenyl diphospho-N-acetyl-alpha-D-muramoyl-L-alanyl-D-glutamyl-meso-2,6-diaminopimeloyl-D-alanyl-D-alanine + UMP. The protein operates within cell wall biogenesis; peptidoglycan biosynthesis. Catalyzes the initial step of the lipid cycle reactions in the biosynthesis of the cell wall peptidoglycan: transfers peptidoglycan precursor phospho-MurNAc-pentapeptide from UDP-MurNAc-pentapeptide onto the lipid carrier undecaprenyl phosphate, yielding undecaprenyl-pyrophosphoryl-MurNAc-pentapeptide, known as lipid I. In Cupriavidus pinatubonensis (strain JMP 134 / LMG 1197) (Cupriavidus necator (strain JMP 134)), this protein is Phospho-N-acetylmuramoyl-pentapeptide-transferase.